The following is a 146-amino-acid chain: MKFHLLLVCVAISLGPIPQSEAGVTEEQMWSAGKLMRDVCLPKYPKVSVEVADNIRNGDIPNSKDTNCYINCILEMMQAIKKGKFQLESTLKQMDIMLPDSYKDEYRKGINLCKDSTVGLKNAPNCDPAHALLSCLKNNIKVFVFP.

Residues 1 to 22 (MKFHLLLVCVAISLGPIPQSEA) form the signal peptide. Intrachain disulfides connect Cys40–Cys72, Cys68–Cys126, and Cys113–Cys135.

The protein belongs to the PBP/GOBP family. Expressed in adult olfactory system. Expressed exclusively in a subset of chemosensory sensilla on the third antennal segment.

The protein localises to the secreted. In terms of biological role, present in the aqueous fluid surrounding olfactory sensory dendrites and are thought to aid in the capture and transport of hydrophobic odorants into and through this fluid. The sequence is that of General odorant-binding protein 19a (Obp19a) from Drosophila melanogaster (Fruit fly).